A 424-amino-acid polypeptide reads, in one-letter code: Ubiquitin carboxyl-terminal hydrolase 12/46 homolog (424 aa).

In terms of domain architecture, USP spans 24–421 (FGLVNFGNTC…TGYILFYQSR (398 aa)). The active-site Nucleophile is cysteine 33. The interval 131-189 (NAGPSNGNPKATNQGGSTSAMASSIASKSSSTSNSNSNSNSTTNSNGNSSNSTGSLNAN) is disordered. A compositionally biased stretch (polar residues) spans 133 to 144 (GPSNGNPKATNQ). A compositionally biased stretch (low complexity) spans 145 to 189 (GGSTSAMASSIASKSSSTSNSNSNSNSTTNSNGNSSNSTGSLNAN). Histidine 369 functions as the Proton acceptor in the catalytic mechanism.

The protein belongs to the peptidase C19 family. As to quaternary structure, catalytic component of the Usp12-46 deubiquitylase complex consisting of Usp12-46, Wdr20 and Uaf1. The Usp12-46 deubiquitylase complex associates with arr/arrow; the interaction leads to deubiquitination and stabilization of arr/arrow.

The catalysed reaction is Thiol-dependent hydrolysis of ester, thioester, amide, peptide and isopeptide bonds formed by the C-terminal Gly of ubiquitin (a 76-residue protein attached to proteins as an intracellular targeting signal).. In terms of biological role, catalytic component of the Usp12-46 deubiquitylase complex. Deubiquitylates the wg/wingless-signaling receptor arr/arrow, which stabilizes the receptor and increases its concentration at the cell surface; this enhances the sensitivity of cells to wg/wingless-signal stimulation. This increases the amplitude and spatial range of the signaling response to the wg/wingless morphogen gradient, facilitating the precise, concentration-dependent regulation of its target genes. Required for wg/wingless-mediated signaling in the wing imaginal disc and for wg/wingless-dependent regulation of adult intestinal stem cell proliferation. Negative regulator of Notch signaling, possibly by regulating lysosomal degradation of N/Notch and affecting cell surface receptor levels; this may be context and cell-type specific function involved in external sensory organ development but not in wing imaginal-disc dorsoventral boundary signaling. Protects against HTT/huntingtin-induced polyglutamine expansion-dependent neurodegeneration. This is Ubiquitin carboxyl-terminal hydrolase 12/46 homolog from Drosophila melanogaster (Fruit fly).